A 491-amino-acid polypeptide reads, in one-letter code: UDP-glycosyltransferase 73C1 (491 aa).

Residues serine 292, 352-354, 369-377, and 391-394 each bind UDP-alpha-D-glucose; these read SPQ, HCGWNSTLE, and FGDQ.

Belongs to the UDP-glycosyltransferase family.

Involved in the O-glucosylation of trans-zeatin and dihydrozeatin. Also active in vitro on cis-zeatin, dihydrozeatin-9-N-Glc, and olomoucine. Can detoxify the explosive 2,4,6-trinitrotoluene in plant by forming O- or C-glucose conjugates. In Arabidopsis thaliana (Mouse-ear cress), this protein is UDP-glycosyltransferase 73C1 (UGT73C1).